A 192-amino-acid polypeptide reads, in one-letter code: Ribosomal RNA large subunit methyltransferase E (192 aa).

S-adenosyl-L-methionine-binding residues include G46, W48, D63, D79, and D102. Catalysis depends on K142, which acts as the Proton acceptor.

This sequence belongs to the class I-like SAM-binding methyltransferase superfamily. RNA methyltransferase RlmE family.

It localises to the cytoplasm. The catalysed reaction is uridine(2552) in 23S rRNA + S-adenosyl-L-methionine = 2'-O-methyluridine(2552) in 23S rRNA + S-adenosyl-L-homocysteine + H(+). Functionally, specifically methylates the uridine in position 2552 of 23S rRNA at the 2'-O position of the ribose in the fully assembled 50S ribosomal subunit. This chain is Ribosomal RNA large subunit methyltransferase E, found in Wolbachia pipientis wMel.